A 258-amino-acid polypeptide reads, in one-letter code: Imidazole glycerol phosphate synthase subunit HisF (258 aa).

Catalysis depends on residues D11 and D130.

The protein belongs to the HisA/HisF family. As to quaternary structure, heterodimer of HisH and HisF.

The protein localises to the cytoplasm. The catalysed reaction is 5-[(5-phospho-1-deoxy-D-ribulos-1-ylimino)methylamino]-1-(5-phospho-beta-D-ribosyl)imidazole-4-carboxamide + L-glutamine = D-erythro-1-(imidazol-4-yl)glycerol 3-phosphate + 5-amino-1-(5-phospho-beta-D-ribosyl)imidazole-4-carboxamide + L-glutamate + H(+). It participates in amino-acid biosynthesis; L-histidine biosynthesis; L-histidine from 5-phospho-alpha-D-ribose 1-diphosphate: step 5/9. Functionally, IGPS catalyzes the conversion of PRFAR and glutamine to IGP, AICAR and glutamate. The HisF subunit catalyzes the cyclization activity that produces IGP and AICAR from PRFAR using the ammonia provided by the HisH subunit. The protein is Imidazole glycerol phosphate synthase subunit HisF of Stenotrophomonas maltophilia (strain R551-3).